The sequence spans 29 residues: Cytochrome b6-f complex subunit 8 (29 aa).

A helical transmembrane segment spans residues 3 to 23 (ILSISWAFLMVVFTFSLSLVV).

It belongs to the PetN family. In terms of assembly, the 4 large subunits of the cytochrome b6-f complex are cytochrome b6, subunit IV (17 kDa polypeptide, PetD), cytochrome f and the Rieske protein, while the 4 small subunits are PetG, PetL, PetM and PetN. The complex functions as a dimer.

It is found in the plastid. The protein resides in the chloroplast thylakoid membrane. Component of the cytochrome b6-f complex, which mediates electron transfer between photosystem II (PSII) and photosystem I (PSI), cyclic electron flow around PSI, and state transitions. The polypeptide is Cytochrome b6-f complex subunit 8 (Chara vulgaris (Common stonewort)).